Reading from the N-terminus, the 549-residue chain is Cation/acetate symporter ActP (549 aa).

A run of 13 helical transmembrane segments spans residues 33–53, 77–97, 103–123, 148–168, 183–203, 206–226, 262–282, 303–323, 355–375, 404–424, 428–448, 464–484, and 493–513; these read WQAI…TYWA, LAIA…ALVF, GLIY…LIAE, ILSA…QMVG, IAVV…GMLA, WVQI…AFMV, ISAL…PHIL, GFMG…IMLV, LFLG…VAGL, VSKI…ILFE, IAFM…PIIL, GGWL…TIWV, and IFPY…GIWF.

It belongs to the sodium:solute symporter (SSF) (TC 2.A.21) family.

Its subcellular location is the cell inner membrane. In terms of biological role, transports acetate. The chain is Cation/acetate symporter ActP from Salmonella newport (strain SL254).